We begin with the raw amino-acid sequence, 49 residues long: Lysozyme C (49 aa).

The 49-residue stretch at 1-49 folds into the C-type lysozyme domain; that stretch reads SKMKKCEFAKIAKEQHMDGYHGVSLADWVCLVNNESDFNTKAINRNKGI. Glutamate 35 is a catalytic residue.

This sequence belongs to the glycosyl hydrolase 22 family. In terms of assembly, monomer.

Its subcellular location is the secreted. It catalyses the reaction Hydrolysis of (1-&gt;4)-beta-linkages between N-acetylmuramic acid and N-acetyl-D-glucosamine residues in a peptidoglycan and between N-acetyl-D-glucosamine residues in chitodextrins.. Its function is as follows. Lysozymes have primarily a bacteriolytic function; those in tissues and body fluids are associated with the monocyte-macrophage system and enhance the activity of immunoagents. In Pseudocheirus peregrinus (Common ring-tailed possum), this protein is Lysozyme C (LYZ).